The primary structure comprises 301 residues: Haloalkane dehalogenase (301 aa).

The active-site Nucleophile is D123. The active-site Proton donor is D250. H279 acts as the Proton acceptor in catalysis.

This sequence belongs to the haloalkane dehalogenase family. Type 1 subfamily. Monomer.

The enzyme catalyses 1-haloalkane + H2O = a halide anion + a primary alcohol + H(+). Catalyzes hydrolytic cleavage of carbon-halogen bonds in halogenated aliphatic compounds, leading to the formation of the corresponding primary alcohols, halide ions and protons. This Phenylobacterium zucineum (strain HLK1) protein is Haloalkane dehalogenase.